The following is a 56-amino-acid chain: Stable protein 1 (56 aa).

Residues 1-44 form the Stress-response A/B barrel domain; sequence GYTHAFESTFESKSGLQEYLDSAALAAFAEGFLPTLSQRSFNWG.

The chain is Stable protein 1 from Populus euphratica (Euphrates poplar).